Consider the following 83-residue polypeptide: uncharacterized protein (83 aa).

This is an uncharacterized protein from Dictyostelium discoideum (Social amoeba).